The sequence spans 175 residues: MGRTLESKQQIVEELKQLLGEAEMALVLDYQGLSIKEMSDLRTRLQAANGVCKVTKNTLMRRAIDGDSAWSNLDSLLTGTNAFVLVKGDVGGAVKAVQAFQKDTKKSETKGGLFEGKLLSQDEIKAIGDLPSKEALMAQIAGAINAVATKVAVGINEVPSGLARALKQHAESGEG.

It belongs to the universal ribosomal protein uL10 family. Part of the ribosomal stalk of the 50S ribosomal subunit. The N-terminus interacts with L11 and the large rRNA to form the base of the stalk. The C-terminus forms an elongated spine to which L12 dimers bind in a sequential fashion forming a multimeric L10(L12)X complex.

Forms part of the ribosomal stalk, playing a central role in the interaction of the ribosome with GTP-bound translation factors. This chain is Large ribosomal subunit protein uL10, found in Synechococcus sp. (strain WH7803).